Reading from the N-terminus, the 465-residue chain is Anthocyanidin 3-O-glucosyltransferase 2 (465 aa).

H22 acts as the Proton acceptor in catalysis. The an anthocyanidin site is built by H22 and Q87. D122 (charge relay) is an active-site residue. T145 is a UDP-alpha-D-glucose binding site. H154 is a binding site for an anthocyanidin. Positions 345, 347, 362, 365, 366, 367, and 370 each coordinate UDP-alpha-D-glucose. Position 385 (G385) interacts with an anthocyanidin. Residues D386 and Q387 each contribute to the UDP-alpha-D-glucose site.

The protein belongs to the UDP-glycosyltransferase family. As to expression, highest expression detected in fruit, with very low levels detected in petal and leaf.

It carries out the reaction an anthocyanidin + UDP-alpha-D-glucose + H(+) = an anthocyanidin 3-O-beta-D-glucoside + UDP. It catalyses the reaction pelargonidin + UDP-alpha-D-glucose = pelargonidin 3-O-beta-D-glucoside + UDP. The enzyme catalyses cyanidin + UDP-alpha-D-glucose = cyanidin 3-O-beta-D-glucoside + UDP + H(+). Its pathway is pigment biosynthesis; anthocyanin biosynthesis. In terms of biological role, in the presence of other necessary color factors, this glycosylation reaction allows the accumulation of anthocyanin pigments. Anthocyanidins are the preferred substrates, while flavonols are only a minor substrate in vitro. The chain is Anthocyanidin 3-O-glucosyltransferase 2 from Fragaria ananassa (Strawberry).